Consider the following 278-residue polypeptide: Large ribosomal subunit protein uL2 (278 aa).

Residues Gly-222–Arg-278 are disordered. Residues Ile-269–Arg-278 are compositionally biased toward basic residues.

It belongs to the universal ribosomal protein uL2 family. Part of the 50S ribosomal subunit. Forms a bridge to the 30S subunit in the 70S ribosome.

Functionally, one of the primary rRNA binding proteins. Required for association of the 30S and 50S subunits to form the 70S ribosome, for tRNA binding and peptide bond formation. It has been suggested to have peptidyltransferase activity; this is somewhat controversial. Makes several contacts with the 16S rRNA in the 70S ribosome. This chain is Large ribosomal subunit protein uL2, found in Maricaulis maris (strain MCS10) (Caulobacter maris).